A 156-amino-acid polypeptide reads, in one-letter code: Phosphopantetheine adenylyltransferase (156 aa).

Thr-10 contributes to the substrate binding site. Residues 10 to 11 (TF) and His-18 each bind ATP. Positions 42, 74, and 88 each coordinate substrate. Residues 89–91 (GLR), Glu-99, and 124–130 (NAFISSS) contribute to the ATP site.

The protein belongs to the bacterial CoaD family. As to quaternary structure, homohexamer. The cofactor is Mg(2+).

It is found in the cytoplasm. The enzyme catalyses (R)-4'-phosphopantetheine + ATP + H(+) = 3'-dephospho-CoA + diphosphate. It participates in cofactor biosynthesis; coenzyme A biosynthesis; CoA from (R)-pantothenate: step 4/5. Its function is as follows. Reversibly transfers an adenylyl group from ATP to 4'-phosphopantetheine, yielding dephospho-CoA (dPCoA) and pyrophosphate. This is Phosphopantetheine adenylyltransferase from Campylobacter concisus (strain 13826).